The chain runs to 187 residues: RNA pyrophosphohydrolase (187 aa).

The region spanning G6–T149 is the Nudix hydrolase domain. The short motif at G38–G59 is the Nudix box element. A disordered region spans residues A166 to S187.

It belongs to the Nudix hydrolase family. RppH subfamily. The cofactor is a divalent metal cation.

Accelerates the degradation of transcripts by removing pyrophosphate from the 5'-end of triphosphorylated RNA, leading to a more labile monophosphorylated state that can stimulate subsequent ribonuclease cleavage. This Nitrosomonas europaea (strain ATCC 19718 / CIP 103999 / KCTC 2705 / NBRC 14298) protein is RNA pyrophosphohydrolase.